The primary structure comprises 719 residues: Transcription factor E4F1 (719 aa).

The segment at 20-63 (NIITIQTTLGDEDEDIHKCGKCLAEFSALDAFIQHKLSRSCKRT) is required for ubiquitin ligase activity. A disordered region spans residues 59–125 (SCKRTQDPQT…SEDESSSPSK (67 aa)). Positions 98–109 (EKQDAKVASGDK) are enriched in basic and acidic residues. The tract at residues 128–207 (WKLNTEGRYV…GLAFRESGAL (80 aa)) is mediates dimerization and DNA-binding. 2 consecutive C2H2-type zinc fingers follow at residues 136-158 (YVCD…MFTH) and 164-186 (FVCE…KRRH). A C2H2-type 3; degenerate zinc finger spans residues 192–216 (YRCNQCGLAFRESGALTRHLKSLTP). 5 C2H2-type zinc fingers span residues 365–387 (YKCP…VKGH), 393–415 (FKCL…METH), 421–443 (YKCG…MRAH), 449–471 (YHCS…HRTH), and 477–499 (YVCQ…IRHH). Residues 505–527 (FKCSKCGRGFAEHGTLNRHLRAK) form a C2H2-type 9; degenerate zinc finger.

It localises to the nucleus. Its subcellular location is the nucleoplasm. The protein resides in the cytoplasm. It catalyses the reaction S-ubiquitinyl-[E2 ubiquitin-conjugating enzyme]-L-cysteine + [acceptor protein]-L-lysine = [E2 ubiquitin-conjugating enzyme]-L-cysteine + N(6)-ubiquitinyl-[acceptor protein]-L-lysine.. It functions in the pathway protein modification; protein ubiquitination. Its function is as follows. May function as a transcriptional repressor. May also function as a ubiquitin ligase. Functions in cell survival and proliferation through control of the cell cycle. This Danio rerio (Zebrafish) protein is Transcription factor E4F1 (e4f1).